A 163-amino-acid chain; its full sequence is Thiol peroxidase (163 aa).

Positions 16–162 (LQVGDKALDF…FEAAIAAAKA (147 aa)) constitute a Thioredoxin domain. Cys-58 (cysteine sulfenic acid (-SOH) intermediate) is an active-site residue. Cys-58 and Cys-92 form a disulfide bridge.

The protein belongs to the peroxiredoxin family. Tpx subfamily. In terms of assembly, homodimer.

It catalyses the reaction a hydroperoxide + [thioredoxin]-dithiol = an alcohol + [thioredoxin]-disulfide + H2O. Functionally, thiol-specific peroxidase that catalyzes the reduction of hydrogen peroxide and organic hydroperoxides to water and alcohols, respectively. Plays a role in cell protection against oxidative stress by detoxifying peroxides. In Streptococcus pneumoniae serotype 2 (strain D39 / NCTC 7466), this protein is Thiol peroxidase.